Reading from the N-terminus, the 227-residue chain is UPF0173 metal-dependent hydrolase BC_4613 (227 aa).

The protein belongs to the UPF0173 family.

This is UPF0173 metal-dependent hydrolase BC_4613 from Bacillus cereus (strain ATCC 14579 / DSM 31 / CCUG 7414 / JCM 2152 / NBRC 15305 / NCIMB 9373 / NCTC 2599 / NRRL B-3711).